We begin with the raw amino-acid sequence, 181 residues long: UPF0302 protein lmo1921 (181 aa).

It belongs to the UPF0302 family.

In Listeria monocytogenes serovar 1/2a (strain ATCC BAA-679 / EGD-e), this protein is UPF0302 protein lmo1921.